The chain runs to 436 residues: ATP-dependent RNA helicase RhlB (436 aa).

The Q motif signature appears at 9–37 (QKFADFPLHKEVHQALNEAGFEFCTPIQA). One can recognise a Helicase ATP-binding domain in the interval 40 to 219 (LPILLEKKDI…YDHMNEPEKV (180 aa)). 53–60 (AQTGTGKT) is an ATP binding site. A DEAD box motif is present at residues 165-168 (DEAD). The Helicase C-terminal domain maps to 243–390 (KMPLLLSLLE…VTSYDSDALL (148 aa)). The tract at residues 392 to 436 (DIPPPVRIHRKPSTHTRNTRDRSSGRPQGGQRNGPRRHDKTRRHS) is disordered. The segment covering 425–436 (GPRRHDKTRRHS) has biased composition (basic residues).

The protein belongs to the DEAD box helicase family. RhlB subfamily. As to quaternary structure, component of the RNA degradosome, which is a multiprotein complex involved in RNA processing and mRNA degradation.

It is found in the cytoplasm. The catalysed reaction is ATP + H2O = ADP + phosphate + H(+). Its function is as follows. DEAD-box RNA helicase involved in RNA degradation. Has RNA-dependent ATPase activity and unwinds double-stranded RNA. The polypeptide is ATP-dependent RNA helicase RhlB (Shewanella pealeana (strain ATCC 700345 / ANG-SQ1)).